Here is a 493-residue protein sequence, read N- to C-terminus: Proline--tRNA ligase (493 aa).

It belongs to the class-II aminoacyl-tRNA synthetase family. ProS type 3 subfamily. In terms of assembly, homodimer.

It localises to the cytoplasm. The catalysed reaction is tRNA(Pro) + L-proline + ATP = L-prolyl-tRNA(Pro) + AMP + diphosphate. Functionally, catalyzes the attachment of proline to tRNA(Pro) in a two-step reaction: proline is first activated by ATP to form Pro-AMP and then transferred to the acceptor end of tRNA(Pro). In Porphyromonas gingivalis (strain ATCC 33277 / DSM 20709 / CIP 103683 / JCM 12257 / NCTC 11834 / 2561), this protein is Proline--tRNA ligase.